The primary structure comprises 211 residues: Potassium-transporting ATPase KdpC subunit (211 aa).

Residues 13-35 form a helical membrane-spanning segment; sequence VVTMVLTGLLYPLAVTGLAQLLF.

Belongs to the KdpC family. As to quaternary structure, the system is composed of three essential subunits: KdpA, KdpB and KdpC.

It localises to the cell inner membrane. In terms of biological role, part of the high-affinity ATP-driven potassium transport (or Kdp) system, which catalyzes the hydrolysis of ATP coupled with the electrogenic transport of potassium into the cytoplasm. This subunit acts as a catalytic chaperone that increases the ATP-binding affinity of the ATP-hydrolyzing subunit KdpB by the formation of a transient KdpB/KdpC/ATP ternary complex. The chain is Potassium-transporting ATPase KdpC subunit from Myxococcus xanthus (strain DK1622).